The primary structure comprises 348 residues: Phenylalanine--tRNA ligase alpha subunit (348 aa).

A Mg(2+)-binding site is contributed by glutamate 259.

The protein belongs to the class-II aminoacyl-tRNA synthetase family. Phe-tRNA synthetase alpha subunit type 1 subfamily. Tetramer of two alpha and two beta subunits. Mg(2+) is required as a cofactor.

Its subcellular location is the cytoplasm. It carries out the reaction tRNA(Phe) + L-phenylalanine + ATP = L-phenylalanyl-tRNA(Phe) + AMP + diphosphate + H(+). The sequence is that of Phenylalanine--tRNA ligase alpha subunit from Limosilactobacillus reuteri (strain DSM 20016) (Lactobacillus reuteri).